A 463-amino-acid chain; its full sequence is MSLIVTRFAPSPTGYLHIGGLRTAIFNYLFARANQGKFFLRIEDTDLSRNSIEAANAIIEAFKWVGLEYDGEILYQSKRFEIYKEYIQKLLDEDKAYYCYMSKEELDALREEQKARKETPRYDNRYRDFKGTPPKGIEPVVRIKVPQNEVIGFNDGVKGEVKVNTNELDDFIIARSDGTPTYNFVVTIDDALMGITDVIRGDDHLSNTPKQIVLYKALNFKIPNFFHVPMILNEEGQKLSKRHGATNVMDYQEMGYLKEALVNFLARLGWSYQDKEVFSMQELLELFDPKDLNSSPSCFSWHKLNWLNAHYLKNQSVQELLKLLKPFSFSDLSHLNPTQLDRLLDALKERSQTLKELALKIDEVLIAPVEYEEKVFKKLNQALVMPLLEKFKLELNKANFNDESALENAMRQIIEEEKIKAGSFMQPLRLALLGKGGGIGLKEALFILGKTESVKRIEDFLKN.

Positions 10 to 20 match the 'HIGH' region motif; the sequence is PSPTGYLHIGG. A 'KMSKS' region motif is present at residues 238-242; that stretch reads KLSKR. K241 is an ATP binding site.

The protein belongs to the class-I aminoacyl-tRNA synthetase family. Glutamate--tRNA ligase type 1 subfamily. Monomer.

The protein resides in the cytoplasm. The catalysed reaction is tRNA(Glu) + L-glutamate + ATP = L-glutamyl-tRNA(Glu) + AMP + diphosphate. Its function is as follows. Catalyzes the attachment of glutamate to tRNA(Glu) in a two-step reaction: glutamate is first activated by ATP to form Glu-AMP and then transferred to the acceptor end of tRNA(Glu). This chain is Glutamate--tRNA ligase 1, found in Helicobacter pylori (strain ATCC 700392 / 26695) (Campylobacter pylori).